The primary structure comprises 181 residues: UPF0302 protein lin2035 (181 aa).

The protein belongs to the UPF0302 family.

The sequence is that of UPF0302 protein lin2035 from Listeria innocua serovar 6a (strain ATCC BAA-680 / CLIP 11262).